The following is a 497-amino-acid chain: MNHSAPGIPPPPRRVRLKPWLVAQVNSCQYPGLQWVNGEKKLFYIPWRHATRHGPSQDGDNTIFKAWAKETGKYTEGVDEADPAKWKANLRCALNKSRDFQLFYDGPRDMPPQPYKIYEVCSNGPAPTESQPTDDYVLGEEEEEEEEELQRMLPGLSITEPALPGPPNAPYSLPKEDTKWPPALQPPVGLGPPVPDPNLLAPPSGNPAGFRQLLPEVLEPGPLASSQPPTEPLLPDLLISPHMLPLTDLEIKFQYRGRAPRTLTISNPQGCRLFYSQLEATQEQVELFGPVTLEQVRFPSPEDIPSDKQRFYTNQLLDVLDRGLILQLQGQDLYAIRLCQCKVFWSGPCALAHGSCPNPIQREVKTKLFSLEQFLNELILFQKGQTNTPPPFEIFFCFGEEWPDVKPREKKLITVQVVPVAARLLLEMFSGELSWSADSIRLQISNPDLKDHMVEQFKELHHLWQSQQQLQPMVQAPPVAGLDASQGPWPMHPVGMQ.

Residues 12–18 carry the Nuclear localization signal motif; sequence PRRVRLK. Residues 14–122 constitute a DNA-binding region (IRF tryptophan pentad repeat); that stretch reads RVRLKPWLVA…QPYKIYEVCS (109 aa). The disordered stretch occupies residues 124–178; that stretch reads GPAPTESQPTDDYVLGEEEEEEEEELQRMLPGLSITEPALPGPPNAPYSLPKEDT. The span at 137–148 shows a compositional bias: acidic residues; the sequence is VLGEEEEEEEEE. The Nuclear export signal signature appears at 149-159; it reads LQRMLPGLSIT. Ser-157 is modified (phosphoserine; by TBK1). Ser-300 is modified (phosphoserine). Glycyl lysine isopeptide (Lys-Gly) (interchain with G-Cter in ubiquitin) cross-links involve residues Lys-410 and Lys-411. The residue at position 430 (Ser-430) is a Phosphoserine. Position 434 is a phosphoserine; by IKKB (Ser-434). Residues Ser-436 and Ser-439 each carry the phosphoserine modification. The residue at position 445 (Ser-445) is a Phosphoserine; by IKKB.

Belongs to the IRF family. As to quaternary structure, homodimer, when phosphorylated. Interacts with TASL (via pLxIS motif); interaction takes place downstream of TLR7, TLR8 or TLR9, leading to its activation. Interacts with MYD88 and TRAF6. Phosphorylation of serine and threonine residues by IKBKB in a C-terminal autoinhibitory region, stimulates dimerization, transport into the nucleus, assembly with the coactivator CBP/EP300 and initiation of transcription. Post-translationally, 'Lys-63'-linked polyubiquitination by TRAF6 is required for activation.

The protein localises to the cytoplasm. Its subcellular location is the nucleus. Its activity is regulated as follows. Maintained as a monomer in an autoinhibited state. Phosphorylation and activation follow the following steps: innate adapter protein TASL recruits IRF5, thereby licensing IRF5 for phosphorylation by IKBKB. Phosphorylated IRF5 dissociates from the adapter proteins, dimerizes, and then enters the nucleus to induce IFNs. In terms of biological role, transcription factor that plays a critical role in innate immunity by activating expression of type I interferon (IFN) IFNA and INFB and inflammatory cytokines downstream of endolysosomal toll-like receptors TLR7, TLR8 and TLR9. Regulates the transcription of type I IFN genes (IFN-alpha and IFN-beta) and IFN-stimulated genes (ISG) by binding to an interferon-stimulated response element (ISRE) in their promoters. Can efficiently activate both the IFN-beta (IFNB) and the IFN-alpha (IFNA) genes and mediate their induction downstream of the TLR-activated, MyD88-dependent pathway. This chain is Interferon regulatory factor 5, found in Mus musculus (Mouse).